Reading from the N-terminus, the 361-residue chain is Trans-enoyl reductase gkaC (361 aa).

Positions 15–357 (EDVGSFEISR…RREISGKKMV (343 aa)) constitute an Enoyl reductase (ER) domain. Residues 48–51 (CDWK), 172–175 (SSAS), 195–198 (SPKN), Y213, 260–261 (FE), and 351–352 (IS) contribute to the NADP(+) site.

The protein belongs to the zinc-containing alcohol dehydrogenase family. As to quaternary structure, monomer.

It participates in mycotoxin biosynthesis. In terms of biological role, trans-enoyl reductasee; part of the gene cluster that mediates the biosynthesis of GKK1032, fungal natural products containing a macrocyclic para-cyclophane connected to a decahydrofluorene ring system that show potent antitumor activities. Within the pathway, the PKS-NRPS gkaA, with the help of the trans-enoyl reductase gkaC, synthesize the polyketide-tyrosyl acyl thioester product which can be reductively off-loaded by the terminal reductase (R) domain in gkaA. The PKS module of gkaA acts in combination with the trans-acting enoyl reductase gkaC to produce a methylated polyketide attached to the ACP domain. In parallel, the adenylation (A) domain of the NRPS module activated L-tyrosine, which is then transferred to the ACP domain. The condensation (C) domain subsequently links this group to the polyketide chain, forming an enzyme-bound amide. The alpha/beta hydrolase gkaG is then required to catalyze the subsequent Knoevenagel condensation that affords the 3-pyrrolin-2-one ring, whereas the three proteins gkaB, gkadX and gkaZ then function synergistically to form the cyclophane. This is Trans-enoyl reductase gkaC from Penicillium citrinum.